Consider the following 375-residue polypeptide: Probable peptidoglycan glycosyltransferase FtsW (375 aa).

Residues 1 to 16 (MNLNFKLNLKEIERYD) are Cytoplasmic-facing. The chain crosses the membrane as a helical span at residues 17 to 37 (LVILLMAVALTCFGVVMVYSA). Residues 38 to 49 (SSVMATKKFHDG) are Periplasmic-facing. The helical transmembrane segment at 50 to 70 (FYFLKRQGIYAILGCAAMIVA) threads the bilayer. Residues 71–81 (MRIDYRQWREY) lie on the Cytoplasmic side of the membrane. The chain crosses the membrane as a helical span at residues 82–102 (AVPILLGCLLLLLLVFIPGIG). Topologically, residues 103–145 (GAAKGASRWIRFPGFNLQPSELAKIALIMYMAYSLDKKQEKVK) are periplasmic. The helical transmembrane segment at 146–166 (FFSTGFAPYMVLLAILLAILL) threads the bilayer. At 167–169 (KQH) the chain is on the cytoplasmic side. Residues 170 to 190 (DLGSALTMGGVAILMLFAAGT) traverse the membrane as a helical segment. Residues 191 to 193 (RPR) lie on the Periplasmic side of the membrane. Residues 194-214 (YILGMVVLTLPFLYFLVMNVD) form a helical membrane-spanning segment. At 215–233 (YRRRRILAYLNPWEDPTNT) the chain is on the cytoplasmic side. Residues 234-254 (GFQIIQSWLAFGNGGIIGQGL) traverse the membrane as a helical segment. Over 255–279 (GEGKQKMFFLPEAHTDFILSVVGEE) the chain is Periplasmic. A helical membrane pass occupies residues 280-300 (LGLIGVIVIAAMFLMLVLRGV). Over 301–312 (RVALMAQDPFGR) the chain is Cytoplasmic. A helical transmembrane segment spans residues 313-333 (FLAFGIVTLLGIQAFVNMGVV). Topologically, residues 334–343 (TGLLPTKGLA) are periplasmic. The chain crosses the membrane as a helical span at residues 344 to 364 (LPFISYGGSSLIVTLFAVGIL). Residues 365–375 (LNVSTRMKGTP) lie on the Cytoplasmic side of the membrane.

It belongs to the SEDS family. FtsW subfamily.

The protein localises to the cell inner membrane. The enzyme catalyses [GlcNAc-(1-&gt;4)-Mur2Ac(oyl-L-Ala-gamma-D-Glu-L-Lys-D-Ala-D-Ala)](n)-di-trans,octa-cis-undecaprenyl diphosphate + beta-D-GlcNAc-(1-&gt;4)-Mur2Ac(oyl-L-Ala-gamma-D-Glu-L-Lys-D-Ala-D-Ala)-di-trans,octa-cis-undecaprenyl diphosphate = [GlcNAc-(1-&gt;4)-Mur2Ac(oyl-L-Ala-gamma-D-Glu-L-Lys-D-Ala-D-Ala)](n+1)-di-trans,octa-cis-undecaprenyl diphosphate + di-trans,octa-cis-undecaprenyl diphosphate + H(+). It functions in the pathway cell wall biogenesis; peptidoglycan biosynthesis. In terms of biological role, peptidoglycan polymerase that is essential for cell division. The protein is Probable peptidoglycan glycosyltransferase FtsW of Geobacter metallireducens (strain ATCC 53774 / DSM 7210 / GS-15).